Here is a 338-residue protein sequence, read N- to C-terminus: Lumican (338 aa).

The first 18 residues, 1–18, serve as a signal peptide directing secretion; sequence MNVCAFSLALALVGSVSG. Gln-19 carries the post-translational modification Pyrrolidone carboxylic acid. Sulfotyrosine is present on residues Tyr-20, Tyr-21, Tyr-23, and Tyr-30. The 39-residue stretch at 28-66 folds into the LRRNT domain; the sequence is FMYGQISPNCAPECNCPHSYPTAMYCDDLKLKSVPMVPP. LRR repeat units lie at residues 67 to 88, 91 to 114, 117 to 137, 138 to 159, 160 to 181, 185 to 205, 206 to 227, and 230 to 250; these read GIKY…AFEN, DLQW…VFSK, QLKK…PLPK, SLQD…DGLV, NLTF…ASLK, SLEY…GLPT, SLLT…YFKR, and GLQY…PGNS. N-linked (GlcNAc...) (keratan sulfate) asparagine glycosylation occurs at Asn-88. Residue Asn-127 is glycosylated (N-linked (GlcNAc...) (keratan sulfate) asparagine). Asn-160 is a glycosylation site (N-linked (GlcNAc...) (keratan sulfate) asparagine). N-linked (GlcNAc...) (keratan sulfate) asparagine glycosylation is present at Asn-252. LRR repeat units follow at residues 255–276 and 277–296; these read SLLE…NENL and ENYY…SFCK. A disulfide bridge connects residues Cys-295 and Cys-328. A Phosphoserine modification is found at Ser-304. The stretch at 305–326 is one LRR 11 repeat; sequence KIKHLRLDGNPLTQSSLPPDMY.

Belongs to the small leucine-rich proteoglycan (SLRP) family. SLRP class II subfamily. As to quaternary structure, binds to laminin. In terms of processing, contains keratan sulfate. Post-translationally, cys-37, Cys-41, Cys-43 and Cys-53 are involved in disulfide bonds. In terms of tissue distribution, cornea and other tissues.

Its subcellular location is the secreted. The protein resides in the extracellular space. The protein localises to the extracellular matrix. The polypeptide is Lumican (Lum) (Mus musculus (Mouse)).